Here is a 184-residue protein sequence, read N- to C-terminus: Tyrosine-protein kinase receptor Tie-1 (184 aa).

A Protein kinase domain is found at 1–164; that stretch reads QLLQFAADVA…RMQEARKAYV (164 aa). The Proton acceptor role is filled by D25. A Phosphotyrosine; by autocatalysis modification is found at Y53.

Belongs to the protein kinase superfamily. Tyr protein kinase family. Tie subfamily. As to quaternary structure, interacts with svep1. As to expression, expressed in most populations of endothelial cells in 24 hours embryos, including the endocardium.

The protein resides in the cell membrane. The catalysed reaction is L-tyrosyl-[protein] + ATP = O-phospho-L-tyrosyl-[protein] + ADP + H(+). Transmembrane tyrosine-protein kinase. Required for the formation of facial lymphatic structures and brain lymphatic endothelial cells. Also required for embryonic ventral and dorsal migration of parachordal lymphoblasts along the arterial intersegmental vessel. Plays a role in the embryonic formation of the dorsal longitudinal anastomotic vessel. In Danio rerio (Zebrafish), this protein is Tyrosine-protein kinase receptor Tie-1 (tie1).